A 35-amino-acid polypeptide reads, in one-letter code: Trypsin inhibitor 1 (35 aa).

Disulfide bonds link Cys-2–Cys-19, Cys-9–Cys-23, and Cys-18–Cys-34.

In terms of biological role, trypsin inhibitor. This Spinacia oleracea (Spinach) protein is Trypsin inhibitor 1.